We begin with the raw amino-acid sequence, 230 residues long: Voltage-gated hydrogen channel 1 (230 aa).

Over 1–58 (MAGCLRHFTSVGDDTKKREWKQEDVEVAYEEPLKNTPHPFIASYSFRGALKWLLSSHK) the chain is Cytoplasmic. A helical membrane pass occupies residues 59-79 (FQIVIICLVILDALFVLVEVL). The Extracellular segment spans residues 80 to 96 (LDLELLAEKVDHIIPEI). Residues 97 to 119 (FHYLSISVLTFFILEIAGKLYAF) form a helical membrane-spanning segment. At 120-127 (RLEFFHHK) the chain is on the cytoplasmic side. A helical membrane pass occupies residues 128 to 148 (FEVFDAAIVVISFIIDIVYIS). The Extracellular segment spans residues 149 to 155 (REDIFNA). A helical transmembrane segment spans residues 156 to 176 (VGLLILLRLWRVARIVNGVIV). Over 177–230 (SVKTRAEEKMHKLKEQKGSLLEKVAQLEQQCAQQEQEIGRLHKLLQEHNVFPAS) the chain is Cytoplasmic. Residues 178–225 (VKTRAEEKMHKLKEQKGSLLEKVAQLEQQCAQQEQEIGRLHKLLQEHN) are a coiled coil.

This sequence belongs to the hydrogen channel family. In terms of assembly, homodimer.

It localises to the membrane. The protein resides in the cell membrane. Functionally, mediates the voltage-dependent proton permeability of excitable membranes. Forms a proton-selective channel through which protons may pass in accordance with their electrochemical gradient. The polypeptide is Voltage-gated hydrogen channel 1 (hvcn1) (Xenopus laevis (African clawed frog)).